A 711-amino-acid polypeptide reads, in one-letter code: Ribosomal RNA large subunit methyltransferase K/L (711 aa).

The 112-residue stretch at 42-153 folds into the THUMP domain; it reads DAQRAVLWSR…KGRATISVDL (112 aa).

This sequence belongs to the methyltransferase superfamily. RlmKL family.

It localises to the cytoplasm. It carries out the reaction guanosine(2445) in 23S rRNA + S-adenosyl-L-methionine = N(2)-methylguanosine(2445) in 23S rRNA + S-adenosyl-L-homocysteine + H(+). It catalyses the reaction guanosine(2069) in 23S rRNA + S-adenosyl-L-methionine = N(2)-methylguanosine(2069) in 23S rRNA + S-adenosyl-L-homocysteine + H(+). In terms of biological role, specifically methylates the guanine in position 2445 (m2G2445) and the guanine in position 2069 (m7G2069) of 23S rRNA. This is Ribosomal RNA large subunit methyltransferase K/L from Xanthomonas oryzae pv. oryzae (strain MAFF 311018).